The following is a 626-amino-acid chain: Glutamate--cysteine ligase (626 aa).

This sequence belongs to the glutamate--cysteine ligase type 3 family. Monomer.

It carries out the reaction L-cysteine + L-glutamate + ATP = gamma-L-glutamyl-L-cysteine + ADP + phosphate + H(+). Its pathway is sulfur metabolism; glutathione biosynthesis; glutathione from L-cysteine and L-glutamate: step 1/2. Functionally, an essential enzyme in glutathione (L-gamma-glutamyl-L-cysteinylglycine, GSH) biosynthesis, GSH is essential for growth and differentiation to prespore stage. Catalyzes the condensation of glutamate to cysteine. The chain is Glutamate--cysteine ligase (gcsA) from Dictyostelium discoideum (Social amoeba).